The primary structure comprises 235 residues: Large ribosomal subunit protein uL3 (235 aa).

Residues Ser-138–Phe-157 are disordered. Position 151 is an N5-methylglutamine (Gln-151).

This sequence belongs to the universal ribosomal protein uL3 family. In terms of assembly, part of the 50S ribosomal subunit. Forms a cluster with proteins L14 and L19. Post-translationally, methylated by PrmB.

Functionally, one of the primary rRNA binding proteins, it binds directly near the 3'-end of the 23S rRNA, where it nucleates assembly of the 50S subunit. The chain is Large ribosomal subunit protein uL3 from Rhodospirillum centenum (strain ATCC 51521 / SW).